We begin with the raw amino-acid sequence, 122 residues long: Large ribosomal subunit protein uL14 (122 aa).

This sequence belongs to the universal ribosomal protein uL14 family. Part of the 50S ribosomal subunit. Forms a cluster with proteins L3 and L19. In the 70S ribosome, L14 and L19 interact and together make contacts with the 16S rRNA in bridges B5 and B8.

Functionally, binds to 23S rRNA. Forms part of two intersubunit bridges in the 70S ribosome. This Acidothermus cellulolyticus (strain ATCC 43068 / DSM 8971 / 11B) protein is Large ribosomal subunit protein uL14.